A 467-amino-acid chain; its full sequence is Ribulose bisphosphate carboxylase large chain (467 aa).

N6,N6,N6-trimethyllysine is present on lysine 5. Asparagine 114 and threonine 164 together coordinate substrate. Lysine 166 functions as the Proton acceptor in the catalytic mechanism. Lysine 168 provides a ligand contact to substrate. Mg(2+)-binding residues include lysine 192, aspartate 194, and glutamate 195. The residue at position 192 (lysine 192) is an N6-carboxylysine. Histidine 285 serves as the catalytic Proton acceptor. Substrate-binding residues include arginine 286, histidine 318, and serine 370.

Belongs to the RuBisCO large chain family. Type I subfamily. In terms of assembly, heterohexadecamer of 8 large chains and 8 small chains; disulfide-linked. The disulfide link is formed within the large subunit homodimers. The cofactor is Mg(2+). The disulfide bond which can form in the large chain dimeric partners within the hexadecamer appears to be associated with oxidative stress and protein turnover.

The protein resides in the plastid. The protein localises to the chloroplast. It catalyses the reaction 2 (2R)-3-phosphoglycerate + 2 H(+) = D-ribulose 1,5-bisphosphate + CO2 + H2O. It carries out the reaction D-ribulose 1,5-bisphosphate + O2 = 2-phosphoglycolate + (2R)-3-phosphoglycerate + 2 H(+). RuBisCO catalyzes two reactions: the carboxylation of D-ribulose 1,5-bisphosphate, the primary event in carbon dioxide fixation, as well as the oxidative fragmentation of the pentose substrate in the photorespiration process. Both reactions occur simultaneously and in competition at the same active site. The sequence is that of Ribulose bisphosphate carboxylase large chain from Jasminum simplicifolium subsp. suavissimum (Native jasmine).